Consider the following 454-residue polypeptide: Membrane-bound lytic murein transglycosylase F (454 aa).

The first 24 residues, 1-24, serve as a signal peptide directing secretion; it reads MRRPLRRVTVVLLWVALAIGVAWF. The segment at 25–265 is non-LT domain; sequence YDYRRSMQSL…IYNRYYTAVD (241 aa). The interval 266-454 is LT domain; sequence TFDYVDVKKF…YDILKQKKAV (189 aa). The active site involves Glu-311.

This sequence in the N-terminal section; belongs to the bacterial solute-binding protein 3 family. It in the C-terminal section; belongs to the transglycosylase Slt family.

It localises to the cell outer membrane. It carries out the reaction Exolytic cleavage of the (1-&gt;4)-beta-glycosidic linkage between N-acetylmuramic acid (MurNAc) and N-acetylglucosamine (GlcNAc) residues in peptidoglycan, from either the reducing or the non-reducing ends of the peptidoglycan chains, with concomitant formation of a 1,6-anhydrobond in the MurNAc residue.. In terms of biological role, murein-degrading enzyme that degrades murein glycan strands and insoluble, high-molecular weight murein sacculi, with the concomitant formation of a 1,6-anhydromuramoyl product. Lytic transglycosylases (LTs) play an integral role in the metabolism of the peptidoglycan (PG) sacculus. Their lytic action creates space within the PG sacculus to allow for its expansion as well as for the insertion of various structures such as secretion systems and flagella. The sequence is that of Membrane-bound lytic murein transglycosylase F from Desulfosudis oleivorans (strain DSM 6200 / JCM 39069 / Hxd3) (Desulfococcus oleovorans).